The sequence spans 460 residues: Elongation factor 1-alpha 3 (460 aa).

The 238-residue stretch at 6–243 (KTHINIVVIG…DCIIPPQRPT (238 aa)) folds into the tr-type G domain. The tract at residues 15–22 (GHVDSGKS) is G1. The interval 71–75 (GITID) is G2. The tract at residues 92–95 (DAPG) is G3. A G4 region spans residues 154 to 157 (NKMD). The segment at 195-197 (SGF) is G5. 5-glutamyl glycerylphosphorylethanolamine occurs at positions 302 and 375.

The protein belongs to the TRAFAC class translation factor GTPase superfamily. Classic translation factor GTPase family. EF-Tu/EF-1A subfamily.

It is found in the cytoplasm. Functionally, this protein promotes the GTP-dependent binding of aminoacyl-tRNA to the A-site of ribosomes during protein biosynthesis. This is Elongation factor 1-alpha 3 (eft-3) from Oscheius tipulae.